Here is a 230-residue protein sequence, read N- to C-terminus: Ribosomal RNA large subunit methyltransferase E (230 aa).

S-adenosyl-L-methionine contacts are provided by G82, W84, D100, D116, and D140. The active-site Proton acceptor is K180.

Belongs to the class I-like SAM-binding methyltransferase superfamily. RNA methyltransferase RlmE family.

It is found in the cytoplasm. It carries out the reaction uridine(2552) in 23S rRNA + S-adenosyl-L-methionine = 2'-O-methyluridine(2552) in 23S rRNA + S-adenosyl-L-homocysteine + H(+). Its function is as follows. Specifically methylates the uridine in position 2552 of 23S rRNA at the 2'-O position of the ribose in the fully assembled 50S ribosomal subunit. The chain is Ribosomal RNA large subunit methyltransferase E from Granulibacter bethesdensis (strain ATCC BAA-1260 / CGDNIH1).